Here is a 235-residue protein sequence, read N- to C-terminus: Adenosine 5'-phosphosulfate reductase (235 aa).

Positions 121, 122, 204, and 207 each coordinate [4Fe-4S] cluster. Cys-230 (nucleophile; cysteine thiosulfonate intermediate) is an active-site residue.

The protein belongs to the PAPS reductase family. CysH subfamily. Requires [4Fe-4S] cluster as cofactor.

It localises to the cytoplasm. The catalysed reaction is [thioredoxin]-disulfide + sulfite + AMP + 2 H(+) = adenosine 5'-phosphosulfate + [thioredoxin]-dithiol. It participates in sulfur metabolism; hydrogen sulfide biosynthesis; sulfite from sulfate. Its function is as follows. Catalyzes the formation of sulfite from adenosine 5'-phosphosulfate (APS) using thioredoxin as an electron donor. The chain is Adenosine 5'-phosphosulfate reductase from Geobacillus thermodenitrificans (strain NG80-2).